The primary structure comprises 268 residues: Tryptophan synthase alpha chain (268 aa).

Catalysis depends on proton acceptor residues glutamate 49 and aspartate 60.

Belongs to the TrpA family. Tetramer of two alpha and two beta chains.

It carries out the reaction (1S,2R)-1-C-(indol-3-yl)glycerol 3-phosphate + L-serine = D-glyceraldehyde 3-phosphate + L-tryptophan + H2O. It functions in the pathway amino-acid biosynthesis; L-tryptophan biosynthesis; L-tryptophan from chorismate: step 5/5. Its function is as follows. The alpha subunit is responsible for the aldol cleavage of indoleglycerol phosphate to indole and glyceraldehyde 3-phosphate. The sequence is that of Tryptophan synthase alpha chain from Dechloromonas aromatica (strain RCB).